We begin with the raw amino-acid sequence, 472 residues long: UDP-glucosyltransferase 103 (472 aa).

The active-site Proton acceptor is the histidine 15. Histidine 15 contributes to the an anthocyanidin binding site. Residue aspartate 117 is the Charge relay of the active site. Alanine 344, glutamine 346, histidine 361, tryptophan 364, asparagine 365, serine 366, and glutamate 369 together coordinate UDP-alpha-D-glucose. An anthocyanidin is bound at residue glycine 384. Positions 385 and 386 each coordinate UDP-alpha-D-glucose.

Belongs to the UDP-glycosyltransferase family.

The enzyme catalyses (20S)-ginsenoside F1 + UDP-alpha-D-glucose = (20S)-ginsenoside Rg1 + UDP + H(+). It functions in the pathway secondary metabolite biosynthesis; terpenoid biosynthesis. Probable component of the triterpene saponins (e.g. ginsenosides) biosynthetic pathway. No detectable activity toward protopanaxatriol (PPT). This Panax ginseng (Korean ginseng) protein is UDP-glucosyltransferase 103.